The chain runs to 1524 residues: Protein dispatched homolog 1 (1524 aa).

An N-linked (GlcNAc...) asparagine glycan is attached at Asn-59. Transmembrane regions (helical) follow at residues Val-190 to Val-210, Leu-500 to Val-520, Met-525 to Leu-545, and Val-549 to Ile-569. One can recognise an SSD domain in the interval Gly-486–Leu-658. Asn-582 is a glycosylation site (N-linked (GlcNAc...) asparagine). The next 8 membrane-spanning stretches (helical) occupy residues Ala-604 to Val-624, Gly-638 to Leu-658, Tyr-719 to Asn-739, Met-988 to Ile-1008, Leu-1010 to Leu-1030, Val-1040 to Tyr-1060, Val-1079 to Pro-1099, and Gln-1107 to Phe-1127.

Belongs to the dispatched family. In terms of assembly, interacts with SHH via the cholesterol anchor of the dually lipid-modified SHH (ShhNp).

Its subcellular location is the membrane. In terms of biological role, functions in hedgehog (Hh) signaling. Regulates the release and extracellular accumulation of cholesterol-modified hedgehog proteins and is hence required for effective production of the Hh signal. Synergizes with SCUBE2 to cause an increase in SHH secretion. This chain is Protein dispatched homolog 1 (DISP1), found in Homo sapiens (Human).